The sequence spans 57 residues: Small ribosomal subunit protein bS21 (57 aa).

Residues Val32–Phe57 form a disordered region. The segment covering Arg33 to Phe57 has biased composition (basic residues).

The protein belongs to the bacterial ribosomal protein bS21 family.

This Shouchella clausii (strain KSM-K16) (Alkalihalobacillus clausii) protein is Small ribosomal subunit protein bS21.